A 226-amino-acid polypeptide reads, in one-letter code: MDSEHWISRLAAAKRFYAAQLGHADRAGMEEVDMDEEVRPEFACPYCYEDHDVVSLCAHLEEEHPFEPHAAPCPICSDKIAKDMLNHITVQHGYLFKNRRRLRRFVIPGSQALSLLSRDLREAHLQVLLGGGGHRSNNSSNTTNISADPLLSSFGLSFPTSDTEETSKPPISIPDDASVIKETPAQPWDSSIDSSLTREEREQKRKQASVRATFVQDLLLTTLFGD.

Positions 158-208 are disordered; that stretch reads FPTSDTEETSKPPISIPDDASVIKETPAQPWDSSIDSSLTREEREQKRKQA. The span at 196–205 shows a compositional bias: basic and acidic residues; the sequence is LTREEREQKR.

This sequence belongs to the Di19 family.

The polypeptide is Protein DEHYDRATION-INDUCED 19 (DI19-1) (Oryza sativa subsp. japonica (Rice)).